The following is a 333-amino-acid chain: MGIRVAVAGASGYAGGELLRLITGHPEFDLVAATAHSQAGHRLDTVHPQLTGLELVLAETDPAALADADLVFLALPHGESATLAAQLPPKVRVVDLGADHRLADPYAWANYYGGTHAGQWTYGLPELPGQRERIAATTRVANPGCYASAIVLALAPLIAAGAAQPADVVVVAASGASGAGRAAKAHLIAGEVMGDLSPYRVGAHQHVPEIKQATGATSLSFTPVLAPMPRGILATVTAVPVRDVDPQAVLAEAYADAPFVHVLPEGRWPHTAATLGSNSCHLQATVDVDAGRLIVVSGLDNLGRGAAGQAVQNANIMLGLPETTGLSVWGVSP.

Cys145 is a catalytic residue.

This sequence belongs to the NAGSA dehydrogenase family. Type 1 subfamily.

Its subcellular location is the cytoplasm. It catalyses the reaction N-acetyl-L-glutamate 5-semialdehyde + phosphate + NADP(+) = N-acetyl-L-glutamyl 5-phosphate + NADPH + H(+). The protein operates within amino-acid biosynthesis; L-arginine biosynthesis; N(2)-acetyl-L-ornithine from L-glutamate: step 3/4. Catalyzes the NADPH-dependent reduction of N-acetyl-5-glutamyl phosphate to yield N-acetyl-L-glutamate 5-semialdehyde. This is N-acetyl-gamma-glutamyl-phosphate reductase from Salinispora tropica (strain ATCC BAA-916 / DSM 44818 / JCM 13857 / NBRC 105044 / CNB-440).